Reading from the N-terminus, the 611-residue chain is tRNA uridine 5-carboxymethylaminomethyl modification enzyme MnmG (611 aa).

14–19 (GAGHAG) contacts FAD. Residue 274-288 (GPRYCPSIEDKIVKF) participates in NAD(+) binding.

Belongs to the MnmG family. In terms of assembly, homodimer. Heterotetramer of two MnmE and two MnmG subunits. The cofactor is FAD.

It localises to the cytoplasm. Functionally, NAD-binding protein involved in the addition of a carboxymethylaminomethyl (cmnm) group at the wobble position (U34) of certain tRNAs, forming tRNA-cmnm(5)s(2)U34. The chain is tRNA uridine 5-carboxymethylaminomethyl modification enzyme MnmG from Chlamydia felis (strain Fe/C-56) (Chlamydophila felis).